The chain runs to 216 residues: Enolase-phosphatase E1 (216 aa).

D8 and E10 together coordinate Mg(2+). Substrate contacts are provided by residues 115 to 116 and K149; that span reads SS. Residue D172 participates in Mg(2+) binding.

The protein belongs to the HAD-like hydrolase superfamily. MasA/MtnC family. As to quaternary structure, monomer. The cofactor is Mg(2+).

It localises to the cytoplasm. The protein resides in the nucleus. It catalyses the reaction 5-methylsulfanyl-2,3-dioxopentyl phosphate + H2O = 1,2-dihydroxy-5-(methylsulfanyl)pent-1-en-3-one + phosphate. It participates in amino-acid biosynthesis; L-methionine biosynthesis via salvage pathway; L-methionine from S-methyl-5-thio-alpha-D-ribose 1-phosphate: step 3/6. The protein operates within amino-acid biosynthesis; L-methionine biosynthesis via salvage pathway; L-methionine from S-methyl-5-thio-alpha-D-ribose 1-phosphate: step 4/6. Bifunctional enzyme that catalyzes the enolization of 2,3-diketo-5-methylthiopentyl-1-phosphate (DK-MTP-1-P) into the intermediate 2-hydroxy-3-keto-5-methylthiopentenyl-1-phosphate (HK-MTPenyl-1-P), which is then dephosphorylated to form the acireductone 1,2-dihydroxy-3-keto-5-methylthiopentene (DHK-MTPene). This chain is Enolase-phosphatase E1 (utr4), found in Schizosaccharomyces pombe (strain 972 / ATCC 24843) (Fission yeast).